The chain runs to 273 residues: MGILSVDLLITLQILPVFFSNCLFLALYDSVILLKHVVLLLSRSKSTRGEWRRMLTSEGLRCVWKSFLLDAYKQVKLGEDAPNSSVVHVSSTEGGDNSGNGTQEKIAEGATCHLLDFASPERPLVVNFGSATUPPFTSQLPAFRKLVEEFSSVADFLLVYIDEAHPSDGWAIPGDSSLSFEVKKHQNQEDRCAAAQQLLERFSLPPQCRVVADRMDNNANIAYGVAFERVCIVQRQKIAYLGGKGPFSYNLQEVRHWLEKNFSKRUKKTRLAG.

Over 1 to 9 the chain is Lumenal; that stretch reads MGILSVDLL. Residues 10–34 traverse the membrane as a helical; Signal-anchor for type III membrane protein segment; the sequence is ITLQILPVFFSNCLFLALYDSVILL. The Cytoplasmic segment spans residues 35–273; it reads KHVVLLLSRS…KRUKKTRLAG (239 aa). The active site involves U133. 2 non-standard amino acids (selenocysteine) are found at residues U133 and U266.

It belongs to the iodothyronine deiodinase family. Predominantly monomer. Can form homodimers but homodimerization is not essential for enzyme activity. Interacts with USP20 and USP33. Interacts with MARCHF6. Post-translationally, ubiquitinated by MARCHF6, leading to its degradation by the proteasome. Deubiquitinated by USP20 and USP33. Isoform 1 is expressed in the lung, trachea, kidney, heart, skeletal muscle, placenta, fetal brain and several regions of the adult brain. Isoform 2 is expressed in the brain, heart, kidney and trachea.

It localises to the endoplasmic reticulum membrane. The catalysed reaction is 3,3',5-triiodo-L-thyronine + iodide + A + H(+) = L-thyroxine + AH2. It catalyses the reaction 3,3'-diiodo-L-thyronine + iodide + A + H(+) = 3,3',5'-triiodo-L-thyronine + AH2. The enzyme catalyses 3'-iodo-L-thyronine + iodide + A + H(+) = 3',5'-diiodo-L-thyronine + AH2. It carries out the reaction 3,3'-diiodothyronamine + iodide + A + H(+) = 3,3',5'-triiodothyronamine + AH2. The catalysed reaction is 3'-iodothyronamine + iodide + A + H(+) = 3',5'-diiodothyronamine + AH2. Functionally, plays a crucial role in the metabolism of thyroid hormones (TH) and has specific roles in TH activation and inactivation by deiodination. Catalyzes the deiodination of L-thyroxine (T4) to 3,5,3'-triiodothyronine (T3), 3,3',5'-triiodothyronine (rT3) to 3,3'-diiodothyronine (3,3'-T2) and 3',5'-diiodothyronine (3',5'-T2) to 3'-monoiodothyronine (3'-T1) via outer-ring deiodination (ORD). Catalyzes the phenolic ring deiodinations of 3,3',5'-triiodothyronamine and 3',5'- diiodothyronamine. The protein is Type II iodothyronine deiodinase (DIO2) of Homo sapiens (Human).